Here is a 498-residue protein sequence, read N- to C-terminus: Ribose import ATP-binding protein RbsA 1 (498 aa).

ABC transporter domains follow at residues 7–243 (LHIQ…VGRR) and 254–496 (PRGE…IGKS). Residue 39 to 46 (GENGAGKS) participates in ATP binding.

The protein belongs to the ABC transporter superfamily. Ribose importer (TC 3.A.1.2.1) family. In terms of assembly, the complex is composed of an ATP-binding protein (RbsA), two transmembrane proteins (RbsC) and a solute-binding protein (RbsB).

It is found in the cell inner membrane. It carries out the reaction D-ribose(out) + ATP + H2O = D-ribose(in) + ADP + phosphate + H(+). Its function is as follows. Part of the ABC transporter complex RbsABC involved in ribose import. Responsible for energy coupling to the transport system. This is Ribose import ATP-binding protein RbsA 1 from Pasteurella multocida (strain Pm70).